A 287-amino-acid polypeptide reads, in one-letter code: Ribosomal RNA small subunit methyltransferase A (287 aa).

S-adenosyl-L-methionine-binding residues include Asn28, Leu30, Gly55, Glu76, Asp101, and Asn125.

It belongs to the class I-like SAM-binding methyltransferase superfamily. rRNA adenine N(6)-methyltransferase family. RsmA subfamily.

It localises to the cytoplasm. It carries out the reaction adenosine(1518)/adenosine(1519) in 16S rRNA + 4 S-adenosyl-L-methionine = N(6)-dimethyladenosine(1518)/N(6)-dimethyladenosine(1519) in 16S rRNA + 4 S-adenosyl-L-homocysteine + 4 H(+). In terms of biological role, specifically dimethylates two adjacent adenosines (A1518 and A1519) in the loop of a conserved hairpin near the 3'-end of 16S rRNA in the 30S particle. May play a critical role in biogenesis of 30S subunits. In Alkaliphilus oremlandii (strain OhILAs) (Clostridium oremlandii (strain OhILAs)), this protein is Ribosomal RNA small subunit methyltransferase A.